A 500-amino-acid polypeptide reads, in one-letter code: NAD(P)H-quinone oxidoreductase chain 4, chloroplastic (500 aa).

14 consecutive transmembrane segments (helical) span residues 4–24, 35–55, 84–104, 113–133, 134–154, 167–187, 211–231, 242–262, 272–292, 305–325, 330–350, 386–406, 416–436, and 463–483; these read FPWLTIFVGLPISAGFLIFVF, YTIFICVLELLLMTYAFSYYF, GLSLGPILLTGFITTLATLAA, LFHFLMLAMYSGQIGLFSSQN, LLLFFIMWELELIPVYLLLAM, FILYTAGSSVFLLMGALGIAF, ILFYIGFLIAFAVKSPIIPLH, HYSTCMLLAGILLKMGAYGLV, AHSIFSSWLIIVGAIQIIYAA, IAYSSVSHMGFTIIGICSISD, GAILQIISHGFIGAALFFLSG, LALPGMSGFFAELVVFFGIIT, ILITFVTAVGTILTPIYLLSM, and FVSIAILLPVISIGIYPDFVF.

Belongs to the complex I subunit 4 family.

The protein resides in the plastid. It is found in the chloroplast thylakoid membrane. The catalysed reaction is a plastoquinone + NADH + (n+1) H(+)(in) = a plastoquinol + NAD(+) + n H(+)(out). The enzyme catalyses a plastoquinone + NADPH + (n+1) H(+)(in) = a plastoquinol + NADP(+) + n H(+)(out). This Populus trichocarpa (Western balsam poplar) protein is NAD(P)H-quinone oxidoreductase chain 4, chloroplastic.